Consider the following 299-residue polypeptide: Probable transport accessory protein MmpS3 (299 aa).

The tract at residues 1-72 (MSGPNPPGRE…EHVTGGPYVP (72 aa)) is disordered. The helical transmembrane segment at 101 to 121 (VVGVAAIIAAVALVVSVSLLV) threads the bilayer. A compositionally biased stretch (polar residues) spans 128 to 139 (KLATGDTTSSAP). The tract at residues 128-213 (KLATGDTTSS…TTTTPTGPRQ (86 aa)) is disordered. Positions 150 to 163 (PAPPPPPPAPPPTT) are enriched in pro residues. Over residues 164–176 (EIPTATETQTVTV) the composition is skewed to low complexity. Positions 177–193 (TPPPPPPPATTTAPPPA) are enriched in pro residues.

The protein belongs to the MmpS family.

It localises to the cell membrane. The polypeptide is Probable transport accessory protein MmpS3 (mmpS3) (Mycobacterium tuberculosis (strain CDC 1551 / Oshkosh)).